Here is a 122-residue protein sequence, read N- to C-terminus: UPF0145 protein TV0671 (122 aa).

The protein belongs to the UPF0145 family.

The chain is UPF0145 protein TV0671 from Thermoplasma volcanium (strain ATCC 51530 / DSM 4299 / JCM 9571 / NBRC 15438 / GSS1).